Here is a 205-residue protein sequence, read N- to C-terminus: Coenzyme Q-binding protein COQ10, mitochondrial (205 aa).

Belongs to the COQ10 family. Interacts with coenzyme Q.

Its subcellular location is the mitochondrion inner membrane. Functionally, required for the function of coenzyme Q in the respiratory chain. May serve as a chaperone or may be involved in the transport of Q6 from its site of synthesis to the catalytic sites of the respiratory complexes. The sequence is that of Coenzyme Q-binding protein COQ10, mitochondrial (coq10-1) from Dictyostelium discoideum (Social amoeba).